We begin with the raw amino-acid sequence, 210 residues long: Large ribosomal subunit protein uL3 (210 aa).

Belongs to the universal ribosomal protein uL3 family. Part of the 50S ribosomal subunit. Forms a cluster with proteins L14 and L19.

One of the primary rRNA binding proteins, it binds directly near the 3'-end of the 23S rRNA, where it nucleates assembly of the 50S subunit. This chain is Large ribosomal subunit protein uL3, found in Syntrophotalea carbinolica (strain DSM 2380 / NBRC 103641 / GraBd1) (Pelobacter carbinolicus).